Reading from the N-terminus, the 356-residue chain is Alanine racemase, catabolic (356 aa).

The active-site Proton acceptor; specific for D-alanine is K35. N6-(pyridoxal phosphate)lysine is present on K35. R130 lines the substrate pocket. The active-site Proton acceptor; specific for L-alanine is the Y253. M301 is a substrate binding site.

The protein belongs to the alanine racemase family. Pyridoxal 5'-phosphate is required as a cofactor.

It catalyses the reaction L-alanine = D-alanine. In terms of biological role, isomerizes L-alanine to D-alanine which is then oxidized to pyruvate by DadA. This is Alanine racemase, catabolic (dadB) from Klebsiella aerogenes (Enterobacter aerogenes).